Here is a 297-residue protein sequence, read N- to C-terminus: 4-hydroxy-tetrahydrodipicolinate synthase (297 aa).

Residue T50 participates in pyruvate binding. Y138 (proton donor/acceptor) is an active-site residue. The Schiff-base intermediate with substrate role is filled by K166. I208 contacts pyruvate.

This sequence belongs to the DapA family. As to quaternary structure, homotetramer; dimer of dimers.

It is found in the cytoplasm. The enzyme catalyses L-aspartate 4-semialdehyde + pyruvate = (2S,4S)-4-hydroxy-2,3,4,5-tetrahydrodipicolinate + H2O + H(+). The protein operates within amino-acid biosynthesis; L-lysine biosynthesis via DAP pathway; (S)-tetrahydrodipicolinate from L-aspartate: step 3/4. In terms of biological role, catalyzes the condensation of (S)-aspartate-beta-semialdehyde [(S)-ASA] and pyruvate to 4-hydroxy-tetrahydrodipicolinate (HTPA). The chain is 4-hydroxy-tetrahydrodipicolinate synthase from Desulfotalea psychrophila (strain LSv54 / DSM 12343).